Here is a 198-residue protein sequence, read N- to C-terminus: Probable chemoreceptor glutamine deamidase CheD (198 aa).

This sequence belongs to the CheD family.

It carries out the reaction L-glutaminyl-[protein] + H2O = L-glutamyl-[protein] + NH4(+). Functionally, probably deamidates glutamine residues to glutamate on methyl-accepting chemotaxis receptors (MCPs), playing an important role in chemotaxis. In Stenotrophomonas maltophilia (strain K279a), this protein is Probable chemoreceptor glutamine deamidase CheD.